The following is a 101-amino-acid chain: Diptericin-D (101 aa).

An N-terminal signal peptide occupies residues 1-18 (MKLFYLLVICALSLAVMA). O-linked (GalNAc...) threonine glycosylation is found at threonine 28 and threonine 72. Phenylalanine 100 bears the Phenylalanine amide mark.

Belongs to the attacin/sarcotoxin-2 family.

Functionally, has activity against E.coli. This chain is Diptericin-D, found in Protophormia terraenovae (Northern blowfly).